We begin with the raw amino-acid sequence, 457 residues long: Dynein regulatory complex protein 10 (457 aa).

3 coiled-coil regions span residues 101–127 (EKASILQRKQKELEKGEEAEEDWDQER), 209–258 (IQDI…LHQV), and 292–381 (QQDI…AESE). One can recognise an IQ domain in the interval 397 to 426 (MVRAATLIQAMWKGYLVRSMLRSRKKKRVK). Residues 419-457 (SRKKKRVKSKGKDKGKGKEKPKEEKGKEKKAKGKGKGKK) are disordered. Basic and acidic residues predominate over residues 428–445 (KGKDKGKGKEKPKEEKGK). A compositionally biased stretch (basic residues) spans 446–457 (EKKAKGKGKGKK).

Belongs to the DRC10 family. As to quaternary structure, component of the nexin-dynein regulatory complex (N-DRC). Interacts with CFAP52.

The protein resides in the cytoplasm. The protein localises to the cytoskeleton. Its subcellular location is the flagellum axoneme. Functionally, component of the nexin-dynein regulatory complex (N-DRC), a key regulator of ciliary/flagellar motility which maintains the alignment and integrity of the distal axoneme and regulates microtubule sliding in motile axonemes. In Rattus norvegicus (Rat), this protein is Dynein regulatory complex protein 10 (Iqcd).